A 270-amino-acid chain; its full sequence is Phosphatidylglycerol--prolipoprotein diacylglyceryl transferase (270 aa).

The next 7 helical transmembrane spans lie at 10–30 (VAVAIGPLQIHWYGLMYLVGI), 56–76 (LIFWLAMGVIVGGRLGYVLFY), 92–112 (WKGGMAFHGGFVGVMIAAWWF), 120–140 (FFQLMDFVAPLVPIGLGAGRI), 175–195 (SQLYQFALEGVALFIILNLYA), 202–222 (MAVSGMFALFYGIFRFVVEFV), and 237–257 (VTMGQILSLPMIIAGLFLIWL). Arg-139 is an a 1,2-diacyl-sn-glycero-3-phospho-(1'-sn-glycerol) binding site.

This sequence belongs to the Lgt family.

The protein resides in the cell inner membrane. The enzyme catalyses L-cysteinyl-[prolipoprotein] + a 1,2-diacyl-sn-glycero-3-phospho-(1'-sn-glycerol) = an S-1,2-diacyl-sn-glyceryl-L-cysteinyl-[prolipoprotein] + sn-glycerol 1-phosphate + H(+). The protein operates within protein modification; lipoprotein biosynthesis (diacylglyceryl transfer). In terms of biological role, catalyzes the transfer of the diacylglyceryl group from phosphatidylglycerol to the sulfhydryl group of the N-terminal cysteine of a prolipoprotein, the first step in the formation of mature lipoproteins. This is Phosphatidylglycerol--prolipoprotein diacylglyceryl transferase from Pseudomonas syringae pv. tomato (strain ATCC BAA-871 / DC3000).